We begin with the raw amino-acid sequence, 78 residues long: Large ribosomal subunit protein bL28 (78 aa).

This sequence belongs to the bacterial ribosomal protein bL28 family.

The sequence is that of Large ribosomal subunit protein bL28 from Prochlorococcus marinus (strain MIT 9312).